The following is a 192-amino-acid chain: 3-isopropylmalate dehydratase small subunit (192 aa).

It belongs to the LeuD family. LeuD type 1 subfamily. In terms of assembly, heterodimer of LeuC and LeuD.

It carries out the reaction (2R,3S)-3-isopropylmalate = (2S)-2-isopropylmalate. It functions in the pathway amino-acid biosynthesis; L-leucine biosynthesis; L-leucine from 3-methyl-2-oxobutanoate: step 2/4. Its function is as follows. Catalyzes the isomerization between 2-isopropylmalate and 3-isopropylmalate, via the formation of 2-isopropylmaleate. This chain is 3-isopropylmalate dehydratase small subunit, found in Zymomonas mobilis subsp. mobilis (strain ATCC 31821 / ZM4 / CP4).